Reading from the N-terminus, the 98-residue chain is Tax1-binding protein 3 (98 aa).

Residue serine 2 is modified to N-acetylserine. In terms of domain architecture, PDZ spans 12–87; it reads VVQRVEIHKL…VVRLLVTRQS (76 aa).

Interacts (via its PDZ domain) with GLS2. Interacts (via its PDZ domain) with RTKN (via the C-terminal region); this interaction facilitates Rho-mediated activation of the FOS serum response element (SRE). Interacts (via PDZ domain) with ARHGEF16. Interacts (via PDZ domain) with KCNJ4 (via C-terminus). Competes with LIN7A for KCNJ4 binding. Interacts (via its PDZ domain) with CTNNB1; this interaction inhibits the transcriptional activity of CTNNB1. Interacts with ADGRB2. In terms of tissue distribution, detected in kidney distal convoluted tubules (at protein level).

It is found in the cytoplasm. The protein resides in the nucleus. It localises to the cell membrane. Its function is as follows. May regulate a number of protein-protein interactions by competing for PDZ domain binding sites. Binds CTNNB1 and may thereby act as an inhibitor of the Wnt signaling pathway. Competes with LIN7A for KCNJ4 binding, and thereby promotes KCNJ4 internalization. May play a role in the Rho signaling pathway. The chain is Tax1-binding protein 3 from Rattus norvegicus (Rat).